The primary structure comprises 521 residues: Probable cytochrome P450 12d1 proximal, mitochondrial (521 aa).

The N-terminal 19 residues, 1–19 (MNTLSSARSVAIYVGPVRS), are a transit peptide targeting the mitochondrion. Residue cysteine 467 coordinates heme.

Belongs to the cytochrome P450 family. Heme serves as cofactor.

It is found in the mitochondrion membrane. The protein is Probable cytochrome P450 12d1 proximal, mitochondrial (Cyp12d1-p) of Drosophila melanogaster (Fruit fly).